The primary structure comprises 977 residues: MSSSNNAAAAAASPDPSRRREDVVGWLLALFPDLPLPPPPEATDEDLRAALATGRLLCALLRRLCPGALLDDASTDNVGRFRAAVERMGVAKFSASDLERGQMTAVVNCILALKDRFGSRGGDDHRNPGFLTRCDSEGGRKRVESKLQRMLTSPIMSGIPGVDKLTIATDFVMVFQLKQGGYADQLGGKYSDLLKSTSLDNAPTQSLLGVFNSILDESIERKNGQIPYRIACLLRKVILEIERRISTQAGHIRNQNNLIKAREEKYQSRIRVLEVLAGGVSGQTHEKEGMINLKTVKAEETQRIEDEESKKEDVARLLTDKENNDSIISELKKELEETKRLHEAHSQQLETKAAQVSKELEQRIEEVKLMLDDSTKRRIELEELSETRIQFWKKKEVVIDQFVSLQVQNVQDLKLSSVSVRHEILNCQNKWSEELAGLGKSLKVVTNTAEKYHGALAENRKLFNEIQELKGNIRVYCRIRPFRPGEDDKSSSVEYIGDNGELVLSNPTKQGKEGGKNFTFNKVFGPITTQDAVFKDIQPLIRSVLDGYNVCIFAYGQTGSGKTYTMMGPEKATEKEWGVNYRALNDLFNISHDRRDTITYELGVQMIEIYNEQIRDLLGSGGVQKKLGIQNTIQPNGLAVPDATMCPVTSTSHVIELMQTGHDNRAMSATALNERSSRSHSVVTIHVRGQDLKTGNTLRGALHLVDLAGSERVDRSAVTGDRLKEAQHINKSLAALGDVIFSLSQKNAHVPYRNSKLTQVLQTSLGGHAKTLMFVQVNPDVSSYTETLSTLKFAERVSGVELGVARSNKEGKEGKDVKELMDQLSLLKDTISKKDEEIDRLQLLNSSTRLKPTRQADSVLKHSSSSPGITSLGKGTSVGSGAASDLDNFSDTSDRQSEAGSMLSVDPEISGLADVDSDGRTRAVNRVQKLTLPKAGQSSSLRPKPRDPAPAATGVRKSSTSQATPLARNNSTLKRGP.

A compositionally biased stretch (low complexity) spans 1 to 13 (MSSSNNAAAAAAS). The segment at 1-20 (MSSSNNAAAAAASPDPSRRR) is disordered. One can recognise a Calponin-homology (CH) domain in the interval 17 to 118 (SRRREDVVGW…CILALKDRFG (102 aa)). Positions 297–384 (KAEETQRIED…TKRRIELEEL (88 aa)) form a coiled coil. In terms of domain architecture, Kinesin motor spans 472–800 (NIRVYCRIRP…LKFAERVSGV (329 aa)). 556 to 563 (GQTGSGKT) serves as a coordination point for ATP. Residues 812-847 (KEGKDVKELMDQLSLLKDTISKKDEEIDRLQLLNSS) are a coiled coil. Positions 852-977 (PTRQADSVLK…RNNSTLKRGP (126 aa)) are disordered. 2 stretches are compositionally biased toward polar residues: residues 861 to 879 (KHSS…TSVG) and 956 to 977 (RKSS…KRGP).

The protein belongs to the TRAFAC class myosin-kinesin ATPase superfamily. Kinesin family. KIN-14 subfamily.

The sequence is that of Kinesin-like protein KIN-14D from Oryza sativa subsp. japonica (Rice).